Here is a 308-residue protein sequence, read N- to C-terminus: UPF0282 protein SSO3251 (308 aa).

The protein belongs to the UPF0282 family.

This Saccharolobus solfataricus (strain ATCC 35092 / DSM 1617 / JCM 11322 / P2) (Sulfolobus solfataricus) protein is UPF0282 protein SSO3251.